The sequence spans 603 residues: Adenine deaminase (603 aa).

This sequence belongs to the metallo-dependent hydrolases superfamily. Adenine deaminase family. In terms of assembly, homodimer. Mn(2+) serves as cofactor.

It catalyses the reaction adenine + H2O + H(+) = hypoxanthine + NH4(+). The polypeptide is Adenine deaminase (Klebsiella pneumoniae (strain 342)).